The sequence spans 1001 residues: Open rectifier potassium channel protein 1 (1001 aa).

The Cytoplasmic portion of the chain corresponds to 1–6 (MSPNRW). Residues 7–27 (ILLLIFYISYLMFGAAIYYHI) form a helical membrane-spanning segment. An N-linked (GlcNAc...) asparagine glycan is attached at Asn58. Residues 95–111 (AFFFAFTVCSTVGYGNI) constitute an intramembrane region (pore-forming). Residues 120-140 (MIMIAYSVIGIPVNGILFAGL) form a helical membrane-spanning segment. Over 141-170 (GEYFGRTFEAIYRRYKKYKMSTDMHYVPPQ) the chain is Cytoplasmic. A helical membrane pass occupies residues 171-191 (LGLITTVVIALIPGIALFLLL). An intramembrane region (pore-forming) is located at residues 208–224 (LYYSYVTTTTIGFGDYV). A helical membrane pass occupies residues 244–264 (IFVIVWFIFSLGYLVMIMTFI). Over 265–1001 (TRGLQSKKLA…TGSSGAPAEK (737 aa)) the chain is Cytoplasmic. Phosphoserine occurs at positions 332, 373, 562, and 565. Residues 591-668 (SQSYLRNGRG…QAPSARRGSM (78 aa)) are disordered. 3 positions are modified to phosphoserine: Ser685, Ser691, and Ser715. Disordered regions lie at residues 768 to 795 (GGAA…EPPQ) and 830 to 1001 (SPTG…PAEK). Over residues 832–841 (TGGAATAPAA) the composition is skewed to low complexity. The span at 855 to 873 (AANQSQITAGPSNAPTVQS) shows a compositional bias: polar residues. The segment covering 911 to 926 (RRLSLRPSPLARELSP) has biased composition (low complexity). A compositionally biased stretch (polar residues) spans 961–983 (RPSTSSTHSPLSRIVQISQAQRK). Residues 984 to 1001 (SSMPSAAATGSSGAPAEK) show a composition bias toward low complexity.

It belongs to the two pore domain potassium channel (TC 1.A.1.8) family. In terms of tissue distribution, widespread expression in adult, strongest expression in muscle, brain and ovary. Also present at low levels in larva and embryo.

Its subcellular location is the membrane. Its function is as follows. Background potassium channel. Rectification is dependent on external potassium concentration. Acts as an outwardly rectifying channel but as external potassium levels increase, this is reversed. The chain is Open rectifier potassium channel protein 1 (Ork1) from Drosophila melanogaster (Fruit fly).